We begin with the raw amino-acid sequence, 254 residues long: Ferritin-1, chloroplastic (254 aa).

The transit peptide at 1-47 (MASKALSSFTAKPAVSLLPHGVSSSASPSVMSLSFSRHTGGRGVVAA) directs the protein to the chloroplast. The extension peptide (EP) stretch occupies residues 48 to 86 (SSTVDTNNMPMTGVVFQPFEEVKKADLAIPITSNASLAR). The Ferritin-like diiron domain occupies 87–240 (QRYADSSEAA…DFITQLRMVG (154 aa)). Fe cation contacts are provided by Glu-104, Glu-139, His-142, Glu-188, and Gln-222.

It belongs to the ferritin family. Oligomer of 24 subunits. There are two types of subunits: L (light) chain and H (heavy) chain. The major chain can be light or heavy, depending on the species and tissue type. The functional molecule forms a roughly spherical shell with a diameter of 12 nm and contains a central cavity into which the insoluble mineral iron core is deposited.

It is found in the plastid. Its subcellular location is the chloroplast. It carries out the reaction 4 Fe(2+) + O2 + 4 H(+) = 4 Fe(3+) + 2 H2O. Its function is as follows. Stores iron in a soluble, non-toxic, readily available form. Important for iron homeostasis. Has ferroxidase activity. Iron is taken up in the ferrous form and deposited as ferric hydroxides after oxidation. This Brassica napus (Rape) protein is Ferritin-1, chloroplastic (LSC30).